The following is a 122-amino-acid chain: Large ribosomal subunit protein uL14 (122 aa).

The protein belongs to the universal ribosomal protein uL14 family. In terms of assembly, part of the 50S ribosomal subunit. Forms a cluster with proteins L3 and L19. In the 70S ribosome, L14 and L19 interact and together make contacts with the 16S rRNA in bridges B5 and B8.

Its function is as follows. Binds to 23S rRNA. Forms part of two intersubunit bridges in the 70S ribosome. The chain is Large ribosomal subunit protein uL14 from Borrelia hermsii (strain HS1 / DAH).